The primary structure comprises 235 residues: Phosphoribosylaminoimidazole-succinocarboxamide synthase (235 aa).

This sequence belongs to the SAICAR synthetase family.

The enzyme catalyses 5-amino-1-(5-phospho-D-ribosyl)imidazole-4-carboxylate + L-aspartate + ATP = (2S)-2-[5-amino-1-(5-phospho-beta-D-ribosyl)imidazole-4-carboxamido]succinate + ADP + phosphate + 2 H(+). Its pathway is purine metabolism; IMP biosynthesis via de novo pathway; 5-amino-1-(5-phospho-D-ribosyl)imidazole-4-carboxamide from 5-amino-1-(5-phospho-D-ribosyl)imidazole-4-carboxylate: step 1/2. This chain is Phosphoribosylaminoimidazole-succinocarboxamide synthase, found in Streptococcus agalactiae serotype Ia (strain ATCC 27591 / A909 / CDC SS700).